The sequence spans 442 residues: Proline--tRNA ligase (442 aa).

It belongs to the class-II aminoacyl-tRNA synthetase family. ProS type 2 subfamily. As to quaternary structure, homodimer.

Its subcellular location is the cytoplasm. It catalyses the reaction tRNA(Pro) + L-proline + ATP = L-prolyl-tRNA(Pro) + AMP + diphosphate. Its function is as follows. Catalyzes the attachment of proline to tRNA(Pro) in a two-step reaction: proline is first activated by ATP to form Pro-AMP and then transferred to the acceptor end of tRNA(Pro). In Sinorhizobium medicae (strain WSM419) (Ensifer medicae), this protein is Proline--tRNA ligase.